A 470-amino-acid polypeptide reads, in one-letter code: Cell division protein FtsP (470 aa).

The tat-type signal signal peptide spans 1-27 (MSLSRRQFIQASGIALCAGAVPLKASA). Positions 229–287 (VRLRLLNASNSRRYQLQMSDGRPLHVISGDQGFLPAPVSVKQLSLAPGERREILVDMSN) constitute a Plastocyanin-like domain.

Belongs to the FtsP family. Post-translationally, predicted to be exported by the Tat system. The position of the signal peptide cleavage has not been experimentally proven.

It localises to the periplasm. Functionally, cell division protein that is required for growth during stress conditions. May be involved in protecting or stabilizing the divisomal assembly under conditions of stress. The sequence is that of Cell division protein FtsP from Shigella dysenteriae serotype 1 (strain Sd197).